Here is a 3462-residue protein sequence, read N- to C-terminus: DNA-directed RNA polymerase subunit beta'' (3462 aa).

Zn(2+) contacts are provided by cysteine 263, cysteine 335, cysteine 342, and cysteine 345. Positions lysine 541–phenylalanine 1085 are insert-1. The segment at proline 1528–glycine 1585 is insert-2. Residues lysine 1602–leucine 1699 form an insert-3 region. The insert-4 stretch occupies residues leucine 1938–asparagine 2168. An insert-5 region spans residues asparagine 2320–phenylalanine 2870. The interval serine 2972–glutamate 3196 is insert-6.

Belongs to the RNA polymerase beta' chain family. RpoC2 subfamily. In terms of assembly, in plastids the minimal PEP RNA polymerase catalytic core is composed of four subunits: alpha, beta, beta', and beta''. When a (nuclear-encoded) sigma factor is associated with the core the holoenzyme is formed, which can initiate transcription. Zn(2+) serves as cofactor.

It localises to the plastid. The protein resides in the chloroplast. The catalysed reaction is RNA(n) + a ribonucleoside 5'-triphosphate = RNA(n+1) + diphosphate. Its function is as follows. DNA-dependent RNA polymerase catalyzes the transcription of DNA into RNA using the four ribonucleoside triphosphates as substrates. This is DNA-directed RNA polymerase subunit beta'' from Tupiella akineta (Green alga).